The chain runs to 503 residues: Maturase K (503 aa).

It belongs to the intron maturase 2 family. MatK subfamily.

Its subcellular location is the plastid. It localises to the chloroplast. Its function is as follows. Usually encoded in the trnK tRNA gene intron. Probably assists in splicing its own and other chloroplast group II introns. This Silene latifolia (White campion) protein is Maturase K.